Reading from the N-terminus, the 429-residue chain is Enolase (429 aa).

Gln-163 serves as a coordination point for (2R)-2-phosphoglycerate. Catalysis depends on Glu-205, which acts as the Proton donor. Mg(2+) contacts are provided by Asp-242, Glu-286, and Asp-313. (2R)-2-phosphoglycerate is bound by residues Lys-338, Arg-367, Ser-368, and Lys-389. Lys-338 (proton acceptor) is an active-site residue.

The protein belongs to the enolase family. Mg(2+) is required as a cofactor.

The protein resides in the cytoplasm. It localises to the secreted. Its subcellular location is the cell surface. The catalysed reaction is (2R)-2-phosphoglycerate = phosphoenolpyruvate + H2O. Its pathway is carbohydrate degradation; glycolysis; pyruvate from D-glyceraldehyde 3-phosphate: step 4/5. Functionally, catalyzes the reversible conversion of 2-phosphoglycerate (2-PG) into phosphoenolpyruvate (PEP). It is essential for the degradation of carbohydrates via glycolysis. In Pelobacter propionicus (strain DSM 2379 / NBRC 103807 / OttBd1), this protein is Enolase.